A 135-amino-acid chain; its full sequence is Small ribosomal subunit protein uS9 (135 aa).

A compositionally biased stretch (basic and acidic residues) spans 108–118; that stretch reads VGDPRRTEPHK. Positions 108-135 are disordered; it reads VGDPRRTEPHKPNRSTKGPRAKRQKSYR. The span at 119–135 shows a compositional bias: basic residues; sequence PNRSTKGPRAKRQKSYR.

The protein belongs to the universal ribosomal protein uS9 family.

The protein is Small ribosomal subunit protein uS9 (rps9) of Pyrococcus horikoshii (strain ATCC 700860 / DSM 12428 / JCM 9974 / NBRC 100139 / OT-3).